The chain runs to 310 residues: Integrin-binding sialoprotein (310 aa).

Positions 1–16 (MKTVLILLSILGMACA) are cleaved as a signal peptide. Residues S31, S62, S67, S75, S76, S98, and S106 each carry the phosphoserine modification. Residues 61-284 (QSSSDSSEEN…NGDPRGDNYR (224 aa)) form a disordered region. Positions 62 to 74 (SSSDSSEENGNGD) are enriched in low complexity. 2 stretches are compositionally biased toward acidic residues: residues 75 to 87 (SSEE…ETSN) and 96 to 108 (EDSD…ESEA). N110 is a glycosylation site (N-linked (GlcNAc...) asparagine). T144 carries the phosphothreonine modification. The span at 152–174 (DESDEEEEEEEEEENEAEVDDNE) shows a compositional bias: acidic residues. At S154 the chain carries Phosphoserine. The span at 175-187 (QGINGTSSNSTEV) shows a compositional bias: polar residues. N178 and N183 each carry an N-linked (GlcNAc...) asparagine glycan. Acidic residues predominate over residues 198–208 (NGEEDGEEESV). The span at 209 to 227 (TEANTEGITVAGETTTSPN) shows a compositional bias: polar residues. S273 is subject to Phosphoserine. Positions 279–281 (RGD) match the Integrin-binding motif motif. S300 carries the post-translational modification Phosphoserine. A sulfotyrosine mark is found at Y306 and Y307.

Monomer. Interacts with integrins; the interaction promotes cell adhesion.

It is found in the secreted. In terms of biological role, binds tightly to hydroxyapatite. Appears to form an integral part of the mineralized matrix. Probably important to cell-matrix interaction. Promotes adhesion and migration of various cells via the alpha-V/beta-3 integrin receptor (ITGAV:ITGB3). This chain is Integrin-binding sialoprotein (IBSP), found in Bos taurus (Bovine).